Reading from the N-terminus, the 196-residue chain is Adenylyl-sulfate kinase (196 aa).

31 to 38 contributes to the ATP binding site; the sequence is GLSGAGKS. The active-site Phosphoserine intermediate is serine 105.

This sequence belongs to the APS kinase family.

The enzyme catalyses adenosine 5'-phosphosulfate + ATP = 3'-phosphoadenylyl sulfate + ADP + H(+). It participates in sulfur metabolism; hydrogen sulfide biosynthesis; sulfite from sulfate: step 2/3. Catalyzes the synthesis of activated sulfate. The chain is Adenylyl-sulfate kinase from Aeromonas salmonicida (strain A449).